The primary structure comprises 138 residues: Basic phospholipase A2 vurtoxin (138 aa).

An N-terminal signal peptide occupies residues Met1–Gly16. Disulfide bonds link Cys42-Cys131, Cys44-Cys60, Cys59-Cys111, Cys65-Cys138, Cys66-Cys104, Cys73-Cys97, and Cys91-Cys102. 3 residues coordinate Ca(2+): Tyr43, Gly45, and Gly47. His63 is a catalytic residue. A Ca(2+)-binding site is contributed by Asp64. Asp105 is a catalytic residue.

The cofactor is Ca(2+). In terms of tissue distribution, expressed by the venom gland.

The protein resides in the secreted. It carries out the reaction a 1,2-diacyl-sn-glycero-3-phosphocholine + H2O = a 1-acyl-sn-glycero-3-phosphocholine + a fatty acid + H(+). In terms of biological role, snake venom phospholipase A2 that may have a strong anticoagulant activity. Is able to suppress the acetylcholine (ACh)-evoked current mediated by alpha-7 (CHRNA7)-similar nAChRs in L.stagnalis neurons (IC(50)=10.5 uM) and to compete with alpha-bungarotoxin for binding to muscle- and alpha-7 neuronal nAChR types, as well as to AChBPs. In inhibition of alpha-bungarotoxin binding, this toxin is mostly active against T.californica nAChR (IC(50)=0.26 uM), it is moderately active against human alpha-7 nAChR (IC(50)=14 uM), and is not active against L.stagnalis and A.californica AChBP (IC(50)&gt;30 uM). The sequence is that of Basic phospholipase A2 vurtoxin from Vipera renardi (Steppe viper).